Reading from the N-terminus, the 402-residue chain is Acetate kinase (402 aa).

N7 is a binding site for Mg(2+). An ATP-binding site is contributed by K14. R95 serves as a coordination point for substrate. D152 serves as the catalytic Proton donor/acceptor. Residues 212–216 (HLGNG), 286–288 (DMR), and 334–338 (GIGEN) each bind ATP. A Mg(2+)-binding site is contributed by E388.

It belongs to the acetokinase family. As to quaternary structure, homodimer. It depends on Mg(2+) as a cofactor. The cofactor is Mn(2+).

It localises to the cytoplasm. The enzyme catalyses acetate + ATP = acetyl phosphate + ADP. Its pathway is metabolic intermediate biosynthesis; acetyl-CoA biosynthesis; acetyl-CoA from acetate: step 1/2. In terms of biological role, catalyzes the formation of acetyl phosphate from acetate and ATP. Can also catalyze the reverse reaction. This chain is Acetate kinase, found in Nitratidesulfovibrio vulgaris (strain DP4) (Desulfovibrio vulgaris).